Reading from the N-terminus, the 385-residue chain is Probable caffeine synthase 4 (385 aa).

S-adenosyl-L-homocysteine-binding residues include Tyr-18, Cys-62, Asn-67, Asp-101, Leu-102, Ser-140, and Phe-141. Residues Tyr-158, Gln-161, and Phe-162 each contribute to the caffeine site. Asn-179 provides a ligand contact to Mg(2+). Thr-238 provides a ligand contact to caffeine. Residues Asp-261, Phe-263, and Asn-264 each coordinate Mg(2+). Residue Tyr-369 coordinates caffeine.

It belongs to the methyltransferase superfamily. Type-7 methyltransferase family. Requires Mg(2+) as cofactor. As to expression, expressed in roots, stems, young and old leaves.

Its pathway is alkaloid biosynthesis. Its function is as follows. May be involved in the biosynthesis of caffeine. The protein is Probable caffeine synthase 4 of Coffea arabica (Arabian coffee).